Consider the following 310-residue polypeptide: Porphobilinogen deaminase (310 aa).

Cys242 is subject to S-(dipyrrolylmethanemethyl)cysteine.

Belongs to the HMBS family. Monomer. It depends on dipyrromethane as a cofactor.

It carries out the reaction 4 porphobilinogen + H2O = hydroxymethylbilane + 4 NH4(+). The protein operates within porphyrin-containing compound metabolism; protoporphyrin-IX biosynthesis; coproporphyrinogen-III from 5-aminolevulinate: step 2/4. Tetrapolymerization of the monopyrrole PBG into the hydroxymethylbilane pre-uroporphyrinogen in several discrete steps. This is Porphobilinogen deaminase from Shewanella halifaxensis (strain HAW-EB4).